Reading from the N-terminus, the 103-residue chain is UPF0235 protein Dole_0289 (103 aa).

Belongs to the UPF0235 family.

The polypeptide is UPF0235 protein Dole_0289 (Desulfosudis oleivorans (strain DSM 6200 / JCM 39069 / Hxd3) (Desulfococcus oleovorans)).